The chain runs to 556 residues: Glucose-6-phosphate isomerase (556 aa).

Glu-360 (proton donor) is an active-site residue. Residues His-391 and Lys-519 contribute to the active site.

This sequence belongs to the GPI family.

It is found in the cytoplasm. It catalyses the reaction alpha-D-glucose 6-phosphate = beta-D-fructose 6-phosphate. Its pathway is carbohydrate biosynthesis; gluconeogenesis. It functions in the pathway carbohydrate degradation; glycolysis; D-glyceraldehyde 3-phosphate and glycerone phosphate from D-glucose: step 2/4. Its function is as follows. Catalyzes the reversible isomerization of glucose-6-phosphate to fructose-6-phosphate. In Acinetobacter baumannii (strain SDF), this protein is Glucose-6-phosphate isomerase.